Reading from the N-terminus, the 215-residue chain is Cytochrome b6 (215 aa).

A helical transmembrane segment spans residues 32 to 52; the sequence is IFYCLGGITLTCFLVQVATGF. Cys35 is a heme c binding site. Positions 86 and 100 each coordinate heme b. The next 3 helical transmembrane spans lie at 90 to 110, 116 to 136, and 186 to 206; these read ASMMVLMMILHVFRVYLTGGF, LTWVTGVILAVLTASFGVTGY, and LHTFVLPLLTAVFMLMHFSMI. Heme b is bound by residues His187 and His202.

This sequence belongs to the cytochrome b family. PetB subfamily. In terms of assembly, the 4 large subunits of the cytochrome b6-f complex are cytochrome b6, subunit IV (17 kDa polypeptide, PetD), cytochrome f and the Rieske protein, while the 4 small subunits are PetG, PetL, PetM and PetN. The complex functions as a dimer. Requires heme b as cofactor. It depends on heme c as a cofactor.

Its subcellular location is the plastid. It localises to the chloroplast thylakoid membrane. Component of the cytochrome b6-f complex, which mediates electron transfer between photosystem II (PSII) and photosystem I (PSI), cyclic electron flow around PSI, and state transitions. The sequence is that of Cytochrome b6 from Piper cenocladum (Ant piper).